The following is a 244-amino-acid chain: Octanoyltransferase (244 aa).

The tract at residues 1–21 (MDKKLHSVSPESGPNSNLDLT) is disordered. The span at 9 to 21 (SPESGPNSNLDLT) shows a compositional bias: polar residues. The 186-residue stretch at 59-244 (PFSPQAVWLL…LNWEKINQSL (186 aa)) folds into the BPL/LPL catalytic domain. Residues 101 to 108 (RGGEVTHH), 168 to 170 (SIG), and 181 to 183 (GFS) each bind substrate. The active-site Acyl-thioester intermediate is C199.

Belongs to the LipB family.

The protein resides in the cytoplasm. The catalysed reaction is octanoyl-[ACP] + L-lysyl-[protein] = N(6)-octanoyl-L-lysyl-[protein] + holo-[ACP] + H(+). Its pathway is protein modification; protein lipoylation via endogenous pathway; protein N(6)-(lipoyl)lysine from octanoyl-[acyl-carrier-protein]: step 1/2. In terms of biological role, catalyzes the transfer of endogenously produced octanoic acid from octanoyl-acyl-carrier-protein onto the lipoyl domains of lipoate-dependent enzymes. Lipoyl-ACP can also act as a substrate although octanoyl-ACP is likely to be the physiological substrate. The protein is Octanoyltransferase of Prochlorococcus marinus (strain NATL1A).